The following is a 151-amino-acid chain: Flagellar assembly factor FliW (151 aa).

It belongs to the FliW family. Interacts with translational regulator CsrA and flagellin(s).

Its subcellular location is the cytoplasm. Functionally, acts as an anti-CsrA protein, binds CsrA and prevents it from repressing translation of its target genes, one of which is flagellin. Binds to flagellin and participates in the assembly of the flagellum. This Halalkalibacterium halodurans (strain ATCC BAA-125 / DSM 18197 / FERM 7344 / JCM 9153 / C-125) (Bacillus halodurans) protein is Flagellar assembly factor FliW.